The primary structure comprises 401 residues: Argininosuccinate synthase (401 aa).

Alanine 8–serine 16 serves as a coordination point for ATP. Tyrosine 87 serves as a coordination point for L-citrulline. Residue glycine 117 participates in ATP binding. L-aspartate is bound by residues threonine 119, asparagine 123, and aspartate 124. Asparagine 123 is a binding site for L-citrulline. Residues arginine 127, serine 175, glutamate 259, and tyrosine 271 each contribute to the L-citrulline site.

The protein belongs to the argininosuccinate synthase family. Type 1 subfamily. As to quaternary structure, homotetramer.

It is found in the cytoplasm. The catalysed reaction is L-citrulline + L-aspartate + ATP = 2-(N(omega)-L-arginino)succinate + AMP + diphosphate + H(+). Its pathway is amino-acid biosynthesis; L-arginine biosynthesis; L-arginine from L-ornithine and carbamoyl phosphate: step 2/3. In Corynebacterium efficiens (strain DSM 44549 / YS-314 / AJ 12310 / JCM 11189 / NBRC 100395), this protein is Argininosuccinate synthase.